A 440-amino-acid polypeptide reads, in one-letter code: Protein disulfide-isomerase 5-2 (440 aa).

The first 23 residues, 1-23 (MRSLKLLLCWISFLTLSISISAS), serve as a signal peptide directing secretion. A Thioredoxin domain is found at 24–139 (SDDQFTLDGT…LVRYLKKFVA (116 aa)). Catalysis depends on nucleophile residues Cys61 and Cys64. Cys61 and Cys64 are disulfide-bonded. Thr160 carries the phosphothreonine modification. Asn171 carries an N-linked (GlcNAc...) asparagine glycan. Residues 376–396 (SMIGIRSVYILVFLVAVIMML) traverse the membrane as a helical segment. Residues 406-440 (TGVRTATAVRERVDQATTVPEDESSEHKPSDKKED) are disordered. Residues 430–440 (SEHKPSDKKED) are compositionally biased toward basic and acidic residues.

It belongs to the protein disulfide isomerase family. Widely expressed.

The protein localises to the membrane. In terms of biological role, acts as a protein-folding catalyst that interacts with nascent polypeptides to catalyze the formation, isomerization, and reduction or oxidation of disulfide bonds. The protein is Protein disulfide-isomerase 5-2 (PDIL5-2) of Arabidopsis thaliana (Mouse-ear cress).